A 141-amino-acid polypeptide reads, in one-letter code: Myosin regulatory light chain cdc4 (141 aa).

Phosphoserine is present on residues Ser2 and Ser6. 3 EF-hand domains span residues 3-38, 74-109, and 109-141; these read TDDS…CGQN, GDPE…LGEK, and KLSN…ILAN. Positions 87, 89, 91, 93, and 98 each coordinate Ca(2+).

As to quaternary structure, binds to myosin II chains myo2 and myo3. Interacts with vps27 and a PI 4-kinase pik1. Post-translationally, phosphorylated on either Ser-2 or Ser-6 but not both. Phosphorylation is not essential for the function of the protein.

The protein localises to the cytoplasm. Involved in cytokinesis. Required for the formation and function of the contractile ring. The polypeptide is Myosin regulatory light chain cdc4 (cdc4) (Schizosaccharomyces pombe (strain 972 / ATCC 24843) (Fission yeast)).